The primary structure comprises 247 residues: V-type proton ATPase subunit D (247 aa).

It belongs to the V-ATPase D subunit family. V-ATPase is a heteromultimeric enzyme made up of two complexes: the ATP-hydrolytic V1 complex and the proton translocation V0 complex. The V1 complex consists of three catalytic AB heterodimers that form a heterohexamer, three peripheral stalks each consisting of EG heterodimers, one central rotor including subunits D and F, and the regulatory subunits C and H. The proton translocation complex V0 consists of the proton transport subunit a, a ring of proteolipid subunits c9c'', rotary subunit d, subunits e and f, and the accessory subunits ATP6AP1/Ac45 and ATP6AP2/PRR. Interacts with SNX10.

It is found in the membrane. The protein localises to the cytoplasmic vesicle. It localises to the clathrin-coated vesicle membrane. The protein resides in the cytoplasm. Its subcellular location is the cytoskeleton. It is found in the microtubule organizing center. The protein localises to the centrosome. It localises to the cell projection. The protein resides in the cilium. Functionally, subunit of the V1 complex of vacuolar(H+)-ATPase (V-ATPase), a multisubunit enzyme composed of a peripheral complex (V1) that hydrolyzes ATP and a membrane integral complex (V0) that translocates protons. V-ATPase is responsible for acidifying and maintaining the pH of intracellular compartments and in some cell types, is targeted to the plasma membrane, where it is responsible for acidifying the extracellular environment. May play a role in cilium biogenesis through regulation of the transport and the localization of proteins to the cilium. The chain is V-type proton ATPase subunit D (Atp6v1d) from Mus musculus (Mouse).